A 150-amino-acid chain; its full sequence is Large ribosomal subunit protein bL9 (150 aa).

The protein belongs to the bacterial ribosomal protein bL9 family.

Functionally, binds to the 23S rRNA. This Streptococcus equi subsp. zooepidemicus (strain MGCS10565) protein is Large ribosomal subunit protein bL9.